The chain runs to 314 residues: Methylglutaconyl-CoA hydratase, mitochondrial (314 aa).

A mitochondrion-targeting transit peptide spans 1-42 (MAAAAPGALGALRTGRVRLVAACCARLGPAAWARGTAPRRGY). Lys-75 is modified (N6-acetyllysine; alternate). Lys-75 bears the N6-succinyllysine; alternate mark. Positions 80 to 94 (KNLLKMLSKAVDALK) are RNA-binding. Lys-84 carries the post-translational modification N6-succinyllysine. 2 positions are modified to N6-acetyllysine; alternate: Lys-88 and Lys-119. N6-succinyllysine; alternate is present on residues Lys-88 and Lys-119. An N6-succinyllysine mark is found at Lys-123 and Lys-135. An N6-acetyllysine; alternate mark is found at Lys-179 and Lys-186. Lys-179 and Lys-186 each carry N6-succinyllysine; alternate. Lys-304 is modified (N6-succinyllysine).

The protein belongs to the enoyl-CoA hydratase/isomerase family. As to quaternary structure, homohexamer. In terms of tissue distribution, detected in heart, brain, liver, spleen, skeletal muscle and kidney. Expressed in brain, kidney, liver and spleen tissue (at protein level).

It localises to the mitochondrion. The enzyme catalyses (3S)-3-hydroxy-3-methylglutaryl-CoA = 3-methyl-(2E)-glutaconyl-CoA + H2O. It catalyses the reaction (3S)-citramalyl-CoA = itaconyl-CoA + H2O. It carries out the reaction 3-hydroxyisovaleryl-CoA = 3-methylbut-2-enoyl-CoA + H2O. The catalysed reaction is (S)-3-hydroxyglutaryl-CoA = (2E)-glutaconyl-CoA + H2O. It functions in the pathway amino-acid degradation; L-leucine degradation; (S)-3-hydroxy-3-methylglutaryl-CoA from 3-isovaleryl-CoA: step 3/3. Catalyzes the fifth step in the leucine degradation pathway, the reversible hydration of 3-methylglutaconyl-CoA (3-MG-CoA) to 3-hydroxy-3-methylglutaryl-CoA (HMG-CoA). Can catalyze the reverse reaction but at a much lower rate in vitro. HMG-CoA is then quickly degraded by another enzyme (such as HMG-CoA lyase) to give acetyl-CoA and acetoacetate. Uses other substrates such as (2E)-glutaconyl-CoA efficiently in vitro, and to a lesser extent 3-methylcrotonyl-CoA (3-methyl-(2E)-butenoyl-CoA), crotonyl-CoA ((2E)-butenoyl-CoA) and 3-hydroxybutanoyl-CoA (the missing carboxylate reduces affinity to the active site). Originally it was identified as an RNA-binding protein as it binds to AU-rich elements (AREs) in vitro. AREs direct rapid RNA degradation and mRNA deadenylation. Might have itaconyl-CoA hydratase activity, converting itaconyl-CoA into citramalyl-CoA in the C5-dicarboxylate catabolism pathway. The C5-dicarboxylate catabolism pathway is required to detoxify itaconate, an antimicrobial metabolite and immunomodulator produced by macrophages during certain infections, that can act as a vitamin B12-poisoning metabolite. The sequence is that of Methylglutaconyl-CoA hydratase, mitochondrial (Auh) from Mus musculus (Mouse).